A 246-amino-acid polypeptide reads, in one-letter code: Sulfate transporter CysZ (246 aa).

The next 4 helical transmembrane spans lie at 24-44, 69-89, 148-168, and 214-234; these read LFVL…IGFA, IVWP…FTMV, LLVL…WILF, and LLIP…ATLF.

Belongs to the CysZ family.

Its subcellular location is the cell inner membrane. In terms of biological role, high affinity, high specificity proton-dependent sulfate transporter, which mediates sulfate uptake. Provides the sulfur source for the cysteine synthesis pathway. This chain is Sulfate transporter CysZ, found in Pseudomonas paraeruginosa (strain DSM 24068 / PA7) (Pseudomonas aeruginosa (strain PA7)).